Here is a 333-residue protein sequence, read N- to C-terminus: Beta-ketoacyl-[acyl-carrier-protein] synthase III (333 aa).

Residues Cys-117 and His-257 contribute to the active site. The interval 258–262 (QANLR) is ACP-binding. Asn-287 is a catalytic residue.

It belongs to the thiolase-like superfamily. FabH family. In terms of assembly, homodimer.

It localises to the cytoplasm. The enzyme catalyses malonyl-[ACP] + acetyl-CoA + H(+) = 3-oxobutanoyl-[ACP] + CO2 + CoA. It participates in lipid metabolism; fatty acid biosynthesis. Functionally, catalyzes the condensation reaction of fatty acid synthesis by the addition to an acyl acceptor of two carbons from malonyl-ACP. Catalyzes the first condensation reaction which initiates fatty acid synthesis and may therefore play a role in governing the total rate of fatty acid production. Possesses both acetoacetyl-ACP synthase and acetyl transacylase activities. Its substrate specificity determines the biosynthesis of branched-chain and/or straight-chain of fatty acids. This Azobacteroides pseudotrichonymphae genomovar. CFP2 protein is Beta-ketoacyl-[acyl-carrier-protein] synthase III.